Here is a 95-residue protein sequence, read N- to C-terminus: Small ribosomal subunit protein uS19 (95 aa).

The protein belongs to the universal ribosomal protein uS19 family.

Functionally, protein S19 forms a complex with S13 that binds strongly to the 16S ribosomal RNA. The polypeptide is Small ribosomal subunit protein uS19 (Myxococcus xanthus (strain DK1622)).